A 201-amino-acid chain; its full sequence is Protein LIGHT-DEPENDENT SHORT HYPOCOTYLS 2 (201 aa).

Positions 1–14 are enriched in polar residues; the sequence is MDLISQNHNNRNPN. 2 disordered regions span residues 1–37 and 151–201; these read MDLI…YENQ and SRGV…GATQ. The span at 15 to 32 shows a compositional bias: low complexity; that stretch reads TSLSTQTPSSFSSPPSSS. The region spanning 33 to 160 is the ALOG domain; it reads RYENQKRRDW…SRGVSYEKKR (128 aa). The Nuclear localization signal signature appears at 158-162; sequence KKRKR.

The protein belongs to the plant homeotic and developmental regulators ALOG protein family.

It is found in the nucleus. In terms of biological role, probable transcription regulator that acts as a developmental regulator by promoting cell growth in response to light. The sequence is that of Protein LIGHT-DEPENDENT SHORT HYPOCOTYLS 2 (LSH2) from Arabidopsis thaliana (Mouse-ear cress).